The chain runs to 1434 residues: Inositol hexakisphosphate and diphosphoinositol-pentakisphosphate kinase 1 (1434 aa).

Substrate is bound at residue 66–67 (KK). ATP-binding positions include R147, K200, H207, R226, 250-253 (EEFM), and 259-261 (DVK). Residue 226–227 (RK) participates in substrate binding. Residues K261 and R275 each contribute to the substrate site. Residues S277, D322, and 334 to 336 (DVN) each bind ATP. Residue 339 to 342 (SFVK) participates in substrate binding. The polyphosphoinositide-binding domain stretch occupies residues 384 to 455 (PTTSGTMMEL…VLDITRLLLA (72 aa)). Residues 916-1017 (EGSAPAGCGF…PTEMKQSGLG (102 aa)) are disordered. Residues S941 and S984 each carry the phosphoserine modification. The span at 1002–1017 (FSSSRPPTEMKQSGLG) shows a compositional bias: polar residues. 4 positions are modified to phosphoserine: S1034, S1070, S1142, and S1149. Disordered stretches follow at residues 1133–1193 (NHQA…GFSD), 1228–1251 (ESTQ…DTEV), and 1396–1434 (TDNP…EDIS). Residues 1165-1183 (SSGPSSTVSSAGPSSPTTV) are compositionally biased toward low complexity. The segment covering 1403-1434 (LSEETDLQAQEVSEEIDQEPEVVDELSNEDIS) has biased composition (acidic residues).

Belongs to the histidine acid phosphatase family. VIP1 subfamily.

It is found in the cytoplasm. Its subcellular location is the cytosol. The protein resides in the cell membrane. The enzyme catalyses 1D-myo-inositol hexakisphosphate + ATP = 1-diphospho-1D-myo-inositol 2,3,4,5,6-pentakisphosphate + ADP. It carries out the reaction 5-diphospho-1D-myo-inositol 1,2,3,4,6-pentakisphosphate + ATP + H(+) = 1,5-bis(diphospho)-1D-myo-inositol 2,3,4,6-tetrakisphosphate + ADP. Functionally, bifunctional inositol kinase that acts in concert with the IP6K kinases IP6K1, IP6K2 and IP6K3 to synthesize the diphosphate group-containing inositol pyrophosphates diphosphoinositol pentakisphosphate, PP-InsP5, and bis-diphosphoinositol tetrakisphosphate, (PP)2-InsP4. PP-InsP5 and (PP)2-InsP4, also respectively called InsP7 and InsP8, regulate a variety of cellular processes, including apoptosis, vesicle trafficking, cytoskeletal dynamics, exocytosis, insulin signaling and neutrophil activation. Phosphorylates inositol hexakisphosphate (InsP6) at position 1 to produce PP-InsP5 which is in turn phosphorylated by IP6Ks to produce (PP)2-InsP4. Alternatively, phosphorylates PP-InsP5 at position 1, produced by IP6Ks from InsP6, to produce (PP)2-InsP4. Activated when cells are exposed to hyperosmotic stress. The chain is Inositol hexakisphosphate and diphosphoinositol-pentakisphosphate kinase 1 from Rattus norvegicus (Rat).